A 288-amino-acid polypeptide reads, in one-letter code: MNYKLKTRSGWLDEYHQGVRYGLEGKLILEESSPFQKITIYESKRYGKALLLDDCWMTAEKSEKCYHECLIHPALCCSTRIDNILIIGGGDGGSARECLKYKEVKSIDLVEIDLRVIELSQKYLPTIGGNAWSDSRLNLQIKNGIDWVKHTKENSYDVIIIDGADPIGPSKELFSNSFLKDCKRILKPGGVLATQSESPESFQEIHINIVKILREIFDYADPMYGSVSIYPSGLWSWAFASMENPKYIYPKKSRVKEISENCQVWSERWQQGAFNTIPAFIERELAKI.

One can recognise a PABS domain in the interval 9 to 242 (SGWLDEYHQG…GLWSWAFASM (234 aa)). Glutamine 36 lines the S-methyl-5'-thioadenosine pocket. Residues histidine 67 and aspartate 91 each contribute to the spermidine site. Residues glutamate 111 and 143–144 (NG) contribute to the S-methyl-5'-thioadenosine site. The active-site Proton acceptor is the aspartate 162. Residue proline 169 coordinates S-methyl-5'-thioadenosine.

The protein belongs to the spermidine/spermine synthase family. As to quaternary structure, homodimer or homotetramer.

It is found in the cytoplasm. The enzyme catalyses S-adenosyl 3-(methylsulfanyl)propylamine + putrescine = S-methyl-5'-thioadenosine + spermidine + H(+). It participates in amine and polyamine biosynthesis; spermidine biosynthesis; spermidine from putrescine: step 1/1. Its function is as follows. Catalyzes the irreversible transfer of a propylamine group from the amino donor S-adenosylmethioninamine (decarboxy-AdoMet) to putrescine (1,4-diaminobutane) to yield spermidine. This chain is Polyamine aminopropyltransferase, found in Prochlorococcus marinus (strain NATL1A).